We begin with the raw amino-acid sequence, 449 residues long: MAKVAGFRFELKQLFHLMWPILITQFAQAGLGLIDTIMAGHLSANDLAAIAVGVGLWMPVMLLFSAIMIATTPLVAEAKGARTPEHIPVIVRQSLWVAVSLGVIAMLILQLMPFLLPILGVPESLQPKAGLFLHAIGFGMPAVTMYAALRGYSEALGYPRPVTVISLLALVVLVPLNYIFMYGIGPVPHLGSAGCGFATAILQWLMLITLASYIYRAKAYQSTQVFSHWERINLTLVKRILKLGLPIGLAVFFEVSIFSTGAIVLSPLGDTLVAAHQIAMSVTSQLFMIPMSLAIALTIRVGMYYGEKNWVSMRLVQKLGLATATFFAMCTMSLIWFARPQIVAIYTQDPAVFDIALYLLLFAMAYQLMDAWQVGAAGCLRGMQDTKGPMWITLIAYWVVAFPVGTYLARVAKMGPAGVWLGLITGLSIACVLLLMRLYRNNHKLAQQS.

12 consecutive transmembrane segments (helical) span residues 17–39 (LMWP…TIMA), 54–76 (VGLW…PLVA), 97–119 (VAVS…LPIL), 129–151 (AGLF…ALRG), 164–186 (VISL…GIGP), 196–215 (GFAT…SYIY), 243–265 (LGLP…AIVL), 280–302 (MSVT…IRVG), 315–337 (LVQK…LIWF), 352–369 (VFDI…YQLM), 390–412 (MWIT…ARVA), and 417–439 (AGVW…MRLY).

This sequence belongs to the multi antimicrobial extrusion (MATE) (TC 2.A.66.1) family.

It localises to the cell inner membrane. Its function is as follows. Multidrug efflux pump. This Acinetobacter baylyi (strain ATCC 33305 / BD413 / ADP1) protein is Probable multidrug resistance protein NorM (norM).